Reading from the N-terminus, the 327-residue chain is 3' cyclic ADP-D-ribose synthase AaTIR (327 aa).

The interval 10–120 (VALSFAGENR…GILKTIGYIN (111 aa)) is TIR domain. The active site involves Lys-229.

As to quaternary structure, homodimer.

The catalysed reaction is NADP(+) + H2O = ADP-D-ribose 2'-phosphate + nicotinamide + H(+). It carries out the reaction NAD(+) = 3'cADPR + nicotinamide + H(+). Its function is as follows. NAD(+) hydrolase (NADase) that generates 3'cADPR, a cyclization variant of cyclic ADP-D-ribose (also called v2-cADPR). Also cleaves NADP(+), but does not cyclize the product. This Aquimarina amphilecti protein is 3' cyclic ADP-D-ribose synthase AaTIR.